A 501-amino-acid polypeptide reads, in one-letter code: Sucrose-6-phosphate hydrolase (501 aa).

Residues 44 to 47, Gln63, 106 to 107, 167 to 168, and Glu222 contribute to the substrate site; these read LLND, YT, and RD. The active site involves Asp47.

This sequence belongs to the glycosyl hydrolase 32 family.

The enzyme catalyses Hydrolysis of terminal non-reducing beta-D-fructofuranoside residues in beta-D-fructofuranosides.. It functions in the pathway glycan biosynthesis; sucrose metabolism. The chain is Sucrose-6-phosphate hydrolase (scrB) from Pediococcus pentosaceus.